A 161-amino-acid polypeptide reads, in one-letter code: Nucleotide-binding protein mma_0840 (161 aa).

Belongs to the YajQ family.

Nucleotide-binding protein. This chain is Nucleotide-binding protein mma_0840, found in Janthinobacterium sp. (strain Marseille) (Minibacterium massiliensis).